We begin with the raw amino-acid sequence, 77 residues long: Putative ankyrin repeat protein RC0956 (77 aa).

One copy of the ANK repeat lies at 8-38 (TDISPLMLASEYGQVTIVKYLLKHGNYNVKG).

This chain is Putative ankyrin repeat protein RC0956, found in Rickettsia conorii (strain ATCC VR-613 / Malish 7).